A 295-amino-acid chain; its full sequence is Ribosomal RNA small subunit methyltransferase A (295 aa).

S-adenosyl-L-methionine-binding residues include asparagine 28, leucine 30, glycine 55, glutamate 76, aspartate 101, and asparagine 131.

This sequence belongs to the class I-like SAM-binding methyltransferase superfamily. rRNA adenine N(6)-methyltransferase family. RsmA subfamily.

The protein resides in the cytoplasm. It catalyses the reaction adenosine(1518)/adenosine(1519) in 16S rRNA + 4 S-adenosyl-L-methionine = N(6)-dimethyladenosine(1518)/N(6)-dimethyladenosine(1519) in 16S rRNA + 4 S-adenosyl-L-homocysteine + 4 H(+). In terms of biological role, specifically dimethylates two adjacent adenosines (A1518 and A1519) in the loop of a conserved hairpin near the 3'-end of 16S rRNA in the 30S particle. May play a critical role in biogenesis of 30S subunits. This chain is Ribosomal RNA small subunit methyltransferase A, found in Pelotomaculum thermopropionicum (strain DSM 13744 / JCM 10971 / SI).